We begin with the raw amino-acid sequence, 1388 residues long: Rho-associated protein kinase 2 (1388 aa).

The segment at 1–24 (MSRPPPTGKMPGAPEAVSGDGAGA) is disordered. One can recognise a Protein kinase domain in the interval 92 to 354 (YDVVKVIGRG…VEEIKQHPFF (263 aa)). ATP-binding positions include 98–106 (IGRGAFGEV) and Lys121. Asp214 functions as the Proton acceptor in the catalytic mechanism. The AGC-kinase C-terminal domain occupies 357–425 (DQWNWDNIRE…YRENLLLSDS (69 aa)). The segment at 363–784 (NIRETAAPVV…INELLKQKDV (422 aa)) is interaction with PPP1R12A. An interaction with NPM1 region spans residues 373–420 (PELSSDIDSSNFDDIEDDKGDVETFPIPKAFVGNQLPFIGFTYYRENL). Thr414 bears the Phosphothreonine; by ROCK2 mark. Coiled coils occupy residues 439 to 1025 (NEES…KQLL) and 1053 to 1131 (DTDV…IGLD). The REM-1 domain maps to 497–573 (TLRQLEREKA…LDETNALLRT (77 aa)). The segment covering 512–530 (NAEYQRKADHEADKKRNLE) has biased composition (basic and acidic residues). The interval 512 to 532 (NAEYQRKADHEADKKRNLEND) is disordered. A Phosphotyrosine; by SRC modification is found at Tyr722. One can recognise a RhoBD domain in the interval 979-1047 (TSDVANLANE…LAEIMNRKEP (69 aa)). The interval 979 to 1047 (TSDVANLANE…LAEIMNRKEP (69 aa)) is RHOA binding. Residue Ser1137 is modified to Phosphoserine. In terms of domain architecture, PH spans 1150–1349 (ESRLEGWLSL…WVSRLVKKIP (200 aa)). The residue at position 1212 (Thr1212) is a Phosphothreonine. A Phorbol-ester/DAG-type zinc finger spans residues 1260-1315 (GHEFIPTLYHFPTNCEACMKPLWHMFKPPPALECRRCHIKCHKDHMDKKEEIIAPC). A disordered region spans residues 1345 to 1388 (VKKIPKKPPAPDPFARSSPRTSMKIQQNQSIRRPSRQLAPNKPS). Phosphoserine is present on residues Ser1362 and Ser1374. Polar residues predominate over residues 1362–1376 (SPRTSMKIQQNQSIR).

This sequence belongs to the protein kinase superfamily. AGC Ser/Thr protein kinase family. As to quaternary structure, homodimer. Interacts with IRS1. Interacts with RAF1. Interacts with RHOA (activated by GTP). Interacts with RHOB and RHOC. Interacts with PPP1R12A. Interacts with EP300. Interacts with CHORDC1. Interacts with BRCA2. Interacts with NPM1; this interaction enhances ROCK2 activity. Interacts with SORL1. Interacts with PJVK. Mg(2+) serves as cofactor. In terms of processing, autophosphorylated. Phosphorylation at Tyr-722 reduces its binding to RHOA and is crucial for focal adhesion dynamics. Dephosphorylation by PTPN11 stimulates its RHOA binding activity. Cleaved by granzyme B during apoptosis. This leads to constitutive activation of the kinase and membrane blebbing. In terms of tissue distribution, highly expressed in whole brain and in cerebellum, and at lower levels in heart and lung. Detected at low levels in skeletal muscle, spleen, liver, kidney and pancreas.

The protein resides in the cytoplasm. It is found in the cell membrane. Its subcellular location is the nucleus. The protein localises to the cytoskeleton. It localises to the microtubule organizing center. The protein resides in the centrosome. The enzyme catalyses L-seryl-[protein] + ATP = O-phospho-L-seryl-[protein] + ADP + H(+). It catalyses the reaction L-threonyl-[protein] + ATP = O-phospho-L-threonyl-[protein] + ADP + H(+). With respect to regulation, activated by RHOA binding. Inhibited by Y-27632. In terms of biological role, protein kinase which is a key regulator of actin cytoskeleton and cell polarity. Involved in regulation of smooth muscle contraction, actin cytoskeleton organization, stress fiber and focal adhesion formation, neurite retraction, cell adhesion and motility via phosphorylation of ADD1, BRCA2, CNN1, EZR, DPYSL2, EP300, MSN, MYL9/MLC2, NPM1, RDX, PPP1R12A and VIM. Phosphorylates SORL1 and IRF4. Acts as a negative regulator of VEGF-induced angiogenic endothelial cell activation. Positively regulates the activation of p42/MAPK1-p44/MAPK3 and of p90RSK/RPS6KA1 during myogenic differentiation. Plays an important role in the timely initiation of centrosome duplication. Inhibits keratinocyte terminal differentiation. May regulate closure of the eyelids and ventral body wall through organization of actomyosin bundles. Plays a critical role in the regulation of spine and synaptic properties in the hippocampus. Plays an important role in generating the circadian rhythm of the aortic myofilament Ca(2+) sensitivity and vascular contractility by modulating the myosin light chain phosphorylation. The sequence is that of Rho-associated protein kinase 2 (ROCK2) from Bos taurus (Bovine).